Here is a 435-residue protein sequence, read N- to C-terminus: Glutamate-1-semialdehyde 2,1-aminomutase (435 aa).

K266 is subject to N6-(pyridoxal phosphate)lysine.

The protein belongs to the class-III pyridoxal-phosphate-dependent aminotransferase family. HemL subfamily. As to quaternary structure, homodimer. The cofactor is pyridoxal 5'-phosphate.

It localises to the cytoplasm. The enzyme catalyses (S)-4-amino-5-oxopentanoate = 5-aminolevulinate. It functions in the pathway porphyrin-containing compound metabolism; protoporphyrin-IX biosynthesis; 5-aminolevulinate from L-glutamyl-tRNA(Glu): step 2/2. The chain is Glutamate-1-semialdehyde 2,1-aminomutase from Nitrosomonas europaea (strain ATCC 19718 / CIP 103999 / KCTC 2705 / NBRC 14298).